The primary structure comprises 332 residues: Phosphate acyltransferase (332 aa).

This sequence belongs to the PlsX family. As to quaternary structure, homodimer. Probably interacts with PlsY.

The protein localises to the cytoplasm. It carries out the reaction a fatty acyl-[ACP] + phosphate = an acyl phosphate + holo-[ACP]. It participates in lipid metabolism; phospholipid metabolism. Catalyzes the reversible formation of acyl-phosphate (acyl-PO(4)) from acyl-[acyl-carrier-protein] (acyl-ACP). This enzyme utilizes acyl-ACP as fatty acyl donor, but not acyl-CoA. The protein is Phosphate acyltransferase of Streptococcus mutans serotype c (strain ATCC 700610 / UA159).